The chain runs to 284 residues: Ubiquinone biosynthesis protein COQ4, mitochondrial (284 aa).

Zn(2+)-binding residues include H165, D166, H169, and E181.

This sequence belongs to the COQ4 family. As to quaternary structure, component of a multi-subunit COQ enzyme complex, composed of at least COQ3, COQ4, COQ5, COQ6, COQ7 and COQ9. It depends on Zn(2+) as a cofactor.

The protein resides in the mitochondrion inner membrane. It carries out the reaction a 4-hydroxy-3-methoxy-5-(all-trans-polyprenyl)benzoate + H(+) = a 2-methoxy-6-(all-trans-polyprenyl)phenol + CO2. It functions in the pathway cofactor biosynthesis; ubiquinone biosynthesis. Its function is as follows. Lyase that catalyzes the C1-decarboxylation of 4-hydroxy-3-methoxy-5-(all-trans-polyprenyl)benzoic acid into 2-methoxy-6-(all-trans-polyprenyl)phenol during ubiquinone biosynthesis. This is Ubiquinone biosynthesis protein COQ4, mitochondrial from Blastomyces gilchristii (strain SLH14081) (Blastomyces dermatitidis).